The following is a 937-amino-acid chain: MTESKNSFNAKSTLQVGEKSYDYYALSAVPGMEKLPYSLKVLGENLLRTEDGANITEEHIEAIANWDASADPSIEIQFTPARVLMQDFTGVPCVVDLATMREAVKTLGGDPDKVNPLNPAEMVIDHSVIVEAFGRPDALEKNVEIEYERNEERYQFLRWGSEAFSNFRVVPPGTGIVHQVNIEYLARVVFDNDGLAYPDTCIGTDSHTTMENGLGILGWGVGGIEAEAAMLGQPVSMLIPRVVGFKLTGEIPVGVTATDVVLTITEMLRDHGVVQKFVEFYGNGVKSVPLANRATIGNMSPEFGSTCAMFPIDEETIKYLRLTGRPEEQIALVEAYAKAQGMWLEQDAPEAEYSEYLELDLSTVVPSIAGPKRPQDRILLSEAKEQFREDLKAYTNDPVQVDQSIPAKRMANEGGFQPGSTSDLDNYNASWPGEGESAAANAEGRPSNPVTVVSPQGGEYTIDHGMVAIASITSCTNTSNPSVMIGAGLIARKAAEKGLKSKPWVKTICAPGSQVVDGYYQRADLWKDLEALGFYLSGFGCTTCIGNSGPLPEEISEAINEHDLAATAVLSGNRNFEGRISPDVKMNYLASPIMVIAYAIAGTMDFDFENEALGQDQDGNDVFLKDIWPSTEEIEETIQAAISRELYEADYADVFKGDKQWQELDIPSGKTFEWDENSTYIRKAPYFDGMTAEPQPVTDIENARVLAKLGDSVTTDHISPASSIKPGTPAAQYLDAHGVERQDYNSLGSRRGNHEVMMRGTFANIRLQNQLVDIAGGYTRDFTQEGGPQAFIYDACVNYKEAGIPLVVLAGKEYGTGSSRDWAAKGTNLLGVRAVITESFERIHRSNLIGMGVVPLQFPEGESHESLGLDGTETFDITGLTALNEGTTPKTVKVTATKENGEKVEFDAVVRIDTPGEADYFRHGGILQYVLRQMAAS.

A disordered region spans residues 410–450; the sequence is MANEGGFQPGSTSDLDNYNASWPGEGESAAANAEGRPSNPV. Residues 418-429 show a composition bias toward polar residues; sequence PGSTSDLDNYNA. Low complexity predominate over residues 433–444; sequence GEGESAAANAEG. Residues cysteine 475, cysteine 541, and cysteine 544 each coordinate [4Fe-4S] cluster.

It belongs to the aconitase/IPM isomerase family. Monomer. [4Fe-4S] cluster is required as a cofactor.

The catalysed reaction is citrate = D-threo-isocitrate. It catalyses the reaction (2S,3R)-3-hydroxybutane-1,2,3-tricarboxylate = 2-methyl-cis-aconitate + H2O. The protein operates within carbohydrate metabolism; tricarboxylic acid cycle; isocitrate from oxaloacetate: step 2/2. It functions in the pathway organic acid metabolism; propanoate degradation. In terms of biological role, involved in the catabolism of short chain fatty acids (SCFA) via the tricarboxylic acid (TCA)(acetyl degradation route) and probably via the 2-methylcitrate cycle I (propionate degradation route). Catalyzes the reversible isomerization of citrate to isocitrate via cis-aconitate. Could catalyze the hydration of 2-methyl-cis-aconitate to yield (2R,3S)-2-methylisocitrate. The apo form of AcnA functions as a RNA-binding regulatory protein. In Corynebacterium efficiens (strain DSM 44549 / YS-314 / AJ 12310 / JCM 11189 / NBRC 100395), this protein is Aconitate hydratase A (acn).